The following is a 96-amino-acid chain: Putative septation protein SpoVG (96 aa).

This sequence belongs to the SpoVG family.

Essential for sporulation. Interferes with or is a negative regulator of the pathway leading to asymmetric septation. The sequence is that of Putative septation protein SpoVG from Priestia megaterium (Bacillus megaterium).